Reading from the N-terminus, the 227-residue chain is Esterase Rv3036c (227 aa).

Residues 3–23 (YLIATAVLVAVVLVGWPAAGA) form a helical membrane-spanning segment.

The protein belongs to the RsiV family.

The protein resides in the cell membrane. Its subcellular location is the secreted. It localises to the cell wall. The catalysed reaction is a fatty acid ester + H2O = an aliphatic alcohol + a fatty acid + H(+). It catalyses the reaction an acetyl ester + H2O = an aliphatic alcohol + acetate + H(+). The enzyme catalyses a butanoate ester + H2O = an aliphatic alcohol + butanoate + H(+). It carries out the reaction a hexanoate ester + H2O = an aliphatic alcohol + hexanoate + H(+). The catalysed reaction is a dodecanoate ester + H2O = an aliphatic alcohol + dodecanoate + H(+). It catalyses the reaction a tetradecanoate ester + H2O = an aliphatic alcohol + tetradecanoate + H(+). The enzyme catalyses an octanoate ester + H2O = an aliphatic alcohol + octanoate + H(+). Functionally, hydrolyzes ester substrates carbon chain lengths ranging from C2 to C14. In vitro, acetate (C2), butyrate (C4) and caprylate (C6) are hydrolyzed with high efficiency. Has lower activity against laurate (C12), myristate (C14) and caproate (C8), and weak activity against palmitate (C16). The sequence is that of Esterase Rv3036c from Mycobacterium tuberculosis (strain ATCC 25618 / H37Rv).